Consider the following 254-residue polypeptide: Casein kinase II subunit beta-2 (254 aa).

This sequence belongs to the casein kinase 2 subunit beta family. In terms of assembly, tetramer composed of two alpha chains, one beta chain and one beta' chain. In terms of processing, phosphorylated by alpha subunit.

Regulatory subunit of casein kinase II/CK2. As part of the kinase complex regulates the basal catalytic activity of the alpha subunit a constitutively active serine/threonine-protein kinase that phosphorylates a large number of substrates containing acidic residues C-terminal to the phosphorylated serine or threonine. In Schizosaccharomyces pombe (strain 972 / ATCC 24843) (Fission yeast), this protein is Casein kinase II subunit beta-2.